A 158-amino-acid chain; its full sequence is NADH-quinone oxidoreductase subunit B (158 aa).

[4Fe-4S] cluster is bound by residues Cys-37, Cys-38, Cys-102, and Cys-132.

This sequence belongs to the complex I 20 kDa subunit family. As to quaternary structure, NDH-1 is composed of 14 different subunits. Subunits NuoB, C, D, E, F, and G constitute the peripheral sector of the complex. The cofactor is [4Fe-4S] cluster.

The protein localises to the cell inner membrane. It catalyses the reaction a quinone + NADH + 5 H(+)(in) = a quinol + NAD(+) + 4 H(+)(out). In terms of biological role, NDH-1 shuttles electrons from NADH, via FMN and iron-sulfur (Fe-S) centers, to quinones in the respiratory chain. Couples the redox reaction to proton translocation (for every two electrons transferred, four hydrogen ions are translocated across the cytoplasmic membrane), and thus conserves the redox energy in a proton gradient. This chain is NADH-quinone oxidoreductase subunit B, found in Bordetella avium (strain 197N).